A 56-amino-acid chain; its full sequence is Large ribosomal subunit protein bL33c (56 aa).

Belongs to the bacterial ribosomal protein bL33 family.

It localises to the plastid. Its subcellular location is the chloroplast. The polypeptide is Large ribosomal subunit protein bL33c (Rhodomonas salina (Cryptomonas salina)).